Consider the following 225-residue polypeptide: Recoverin family protein DDB_G0274781 (225 aa).

Residues 1–13 (MGNKQGKSPNNSK) are compositionally biased toward low complexity. The interval 1–20 (MGNKQGKSPNNSKGGKKYKI) is disordered. A lipid anchor (N-myristoyl glycine) is attached at Gly2. EF-hand domains follow at residues 78–113 (DNSPFGDRLFDLLDTNKDNTVDLQEFISGLSILCKG), 114–149 (TAEEKLELSFKAYDIDGNGYITKSELSQMFQQAWIS), and 174–209 (MAQIFADGAFSSLDVNGDGKLSFNEFKQFAMSHPKI). Residues Asp91, Asn93, Asp95, Thr97, Glu102, Asp127, Asp129, Asn131, Tyr133, Glu138, Asp187, Asn189, Asp191, Lys193, and Glu198 each contribute to the Ca(2+) site.

Belongs to the recoverin family.

This is Recoverin family protein DDB_G0274781 from Dictyostelium discoideum (Social amoeba).